A 74-amino-acid polypeptide reads, in one-letter code: Brevinin-2MT1 (74 aa).

Residues 1-22 form the signal peptide; sequence MFTMKKSLLVLFFLGTISLSLC. Residues 23–39 constitute a propeptide, removed in mature form; that stretch reads EEERNADEDDGEMTEEE. Cysteine 68 and cysteine 74 are oxidised to a cystine.

Belongs to the frog skin active peptide (FSAP) family. Brevinin subfamily. In terms of tissue distribution, expressed by the skin glands.

The protein resides in the secreted. In terms of biological role, antimicrobial peptide. Active against a variety of Gram-negative and Gram-positive bacterial strains. Active against fungi. Shows hemolytic activity against human erythrocytes. The chain is Brevinin-2MT1 from Amolops mantzorum (Sichuan torrent frog).